A 298-amino-acid chain; its full sequence is Mitochondrial distribution and morphology protein 12 (298 aa).

In terms of domain architecture, SMP-LTD spans methionine 1–leucine 298. The disordered stretch occupies residues serine 118–leucine 142. A compositionally biased stretch (polar residues) spans glutamate 133 to leucine 142.

It belongs to the MDM12 family. As to quaternary structure, component of the ER-mitochondria encounter structure (ERMES) or MDM complex, composed of MMM1, MDM10, MDM12 and MDM34. An MMM1 homodimer associates with one molecule of MDM12 on each side in a pairwise head-to-tail manner, and the SMP-LTD domains of MMM1 and MDM12 generate a continuous hydrophobic tunnel for phospholipid trafficking.

It localises to the mitochondrion outer membrane. Its subcellular location is the endoplasmic reticulum membrane. Functionally, component of the ERMES/MDM complex, which serves as a molecular tether to connect the endoplasmic reticulum (ER) and mitochondria. Components of this complex are involved in the control of mitochondrial shape and protein biogenesis, and function in nonvesicular lipid trafficking between the ER and mitochondria. MDM12 is required for the interaction of the ER-resident membrane protein MMM1 and the outer mitochondrial membrane-resident beta-barrel protein MDM10. The MDM12-MMM1 subcomplex functions in the major beta-barrel assembly pathway that is responsible for biogenesis of all mitochondrial outer membrane beta-barrel proteins, and acts in a late step after the SAM complex. The MDM10-MDM12-MMM1 subcomplex further acts in the TOM40-specific pathway after the action of the MDM12-MMM1 complex. Essential for establishing and maintaining the structure of mitochondria and maintenance of mtDNA nucleoids. The sequence is that of Mitochondrial distribution and morphology protein 12 from Malassezia globosa (strain ATCC MYA-4612 / CBS 7966) (Dandruff-associated fungus).